The primary structure comprises 181 residues: MSRVAKSSITIPTSVEVIITGNLMSVKGRLGQLNMSIHPCVAIMNTNSKLSFDIITIEKKEQRKAWAQAGTARANTANLIQGVTEGWKKKLTLIGVGYRAKVMGKILDLTLGFSHPINYKFPEGIIVETPSQTEIIIKGMDKQKVGQVASEIRSYRPPEPYKGKGVRYIDEQVIHKETKKK.

The protein belongs to the universal ribosomal protein uL6 family. Part of the 50S ribosomal subunit.

In terms of biological role, this protein binds to the 23S rRNA, and is important in its secondary structure. It is located near the subunit interface in the base of the L7/L12 stalk, and near the tRNA binding site of the peptidyltransferase center. This chain is Large ribosomal subunit protein uL6, found in Vesicomyosocius okutanii subsp. Calyptogena okutanii (strain HA).